A 701-amino-acid chain; its full sequence is Elongation factor G (701 aa).

The tr-type G domain occupies 8–290; the sequence is SLYRNIGISA…AVIDYLPAPT (283 aa). Residues 17–24, 88–92, and 142–145 contribute to the GTP site; these read AHIDAGKT, DTPGH, and NKMD.

Belongs to the TRAFAC class translation factor GTPase superfamily. Classic translation factor GTPase family. EF-G/EF-2 subfamily.

Its subcellular location is the cytoplasm. In terms of biological role, catalyzes the GTP-dependent ribosomal translocation step during translation elongation. During this step, the ribosome changes from the pre-translocational (PRE) to the post-translocational (POST) state as the newly formed A-site-bound peptidyl-tRNA and P-site-bound deacylated tRNA move to the P and E sites, respectively. Catalyzes the coordinated movement of the two tRNA molecules, the mRNA and conformational changes in the ribosome. The sequence is that of Elongation factor G from Haemophilus ducreyi (strain 35000HP / ATCC 700724).